The chain runs to 142 residues: Large ribosomal subunit protein uL13 (142 aa).

Belongs to the universal ribosomal protein uL13 family. As to quaternary structure, part of the 50S ribosomal subunit.

In terms of biological role, this protein is one of the early assembly proteins of the 50S ribosomal subunit, although it is not seen to bind rRNA by itself. It is important during the early stages of 50S assembly. This is Large ribosomal subunit protein uL13 from Methanosphaera stadtmanae (strain ATCC 43021 / DSM 3091 / JCM 11832 / MCB-3).